The sequence spans 734 residues: Putative protocadherin beta-18 (734 aa).

5 consecutive Cadherin domains span residues 1–79 (MWKT…TPTF), 80–188 (LNNH…APEF), 189–293 (EKPV…PPEI), 294–398 (AMTS…APIF), and 399–508 (TQTS…SPFV). An N-linked (GlcNAc...) asparagine glycan is attached at N115. N365 and N383 each carry an N-linked (GlcNAc...) asparagine glycan. N514 carries N-linked (GlcNAc...) asparagine glycosylation. The Cadherin 6 domain maps to 515-621 (GSAPCTELVP…GFSQPYLPLT (107 aa)). A helical membrane pass occupies residues 638 to 658 (VVALASVSSLFLFSVFLFVAV).

It is found in the cell membrane. In terms of biological role, potential calcium-dependent cell-adhesion protein. The polypeptide is Putative protocadherin beta-18 (PCDHB18P) (Homo sapiens (Human)).